The following is a 400-amino-acid chain: Protein phyllopod (400 aa).

The tract at residues 109–127 (QERTKLRPVAMVRPTVRVQ) is interaction with sina. Residues 125–145 (RVQPQSQPQLQPQVPINPTPA) are disordered. The segment covering 127–138 (QPQSQPQLQPQV) has biased composition (low complexity). The segment at 241–320 (YQRFPQPSVD…TAISEVLPTA (80 aa)) is interaction with ttk. Residues 319–362 (TARYQVTHEENKENQQAQEMELELEEEEEVDGRAELEVVQEAEA) adopt a coiled-coil conformation. The disordered stretch occupies residues 346 to 382 (EEVDGRAELEVVQEAEAPLEPQSHHKQGNSHQNSHQA).

In terms of assembly, component of some E3 complex at least composed of sina, ebi and phyl, required for the degradation of ttk. In embryos, it is ubiquitously present before cellularization. During stages 9-11, it is expressed in neuroblasts and the SOP cells. From stage 12 onward, it decreases, but remains in a subset of PNS cells at stages 12-14. Weakly expressed in wing imaginal disks, in the SOP cells of wing margin bristles, notal macrochaetes, and other sensory organs. In leg disks, it is expressed in the precursors of the femoral chordotonal organs, as well as in external sensory SOP cells. Strongly expressed in the eye-antenna disk, it is specifically expressed in R1, R6 and R7 cells, and not in R3, R3, R4, R5 and R8 cells.

The protein resides in the nucleus. Its function is as follows. Essential adapter component of E3 ubiquitin ligase complexes; involved in R7 photoreceptor cell differentiation, embryonic nervous system, external sensory organ development and specification of particular muscles. E3 ubiquitin ligase complexes mediate ubiquitination and subsequent proteasomal degradation of target proteins. Required for specification of R7 photoreceptor cell fate in the eye by participating in the ubiquitination and subsequent proteasomal degradation of Tramtrack (ttk), a general inhibitor of photoreceptor differentiation. Acts downstream of Notch signaling to specify the fate of the SOP (sensory organ precursor) cells and their progeny, probably via the sina-mediated proteasomal degradation of ttk. Its restricted pattern of expression, upon Notch and Ras signaling pathways, suggests that it acts as a key determinant in E3 complexes to trigger protein proteolysis in appropriate cells. This Drosophila melanogaster (Fruit fly) protein is Protein phyllopod (phyl).